The primary structure comprises 521 residues: Two-component response regulator ARR11 (521 aa).

Residues arginine 12–leucine 127 enclose the Response regulatory domain. Aspartate 63 is modified (4-aspartylphosphate). A Nuclear localization signal motif is present at residues lysine 192–arginine 195. The segment at residues arginine 195–arginine 246 is a DNA-binding region (myb-like GARP).

It belongs to the ARR family. Type-B subfamily. In terms of assembly, binds the target DNA as a monomer. Two-component system major event consists of a His-to-Asp phosphorelay between a sensor histidine kinase (HK) and a response regulator (RR). In plants, the His-to-Asp phosphorelay involves an additional intermediate named Histidine-containing phosphotransfer protein (HPt). This multistep phosphorelay consists of a His-Asp-His-Asp sequential transfer of a phosphate group between first a His and an Asp of the HK protein, followed by the transfer to a conserved His of the HPt protein and finally the transfer to an Asp in the receiver domain of the RR protein. Detected in the whole plant. Predominantly expressed in roots and stems.

The protein localises to the nucleus. Its function is as follows. Transcriptional activator that binds specifically to the DNA sequence 5'-[AG]GATT-3'. Functions as a response regulator involved in His-to-Asp phosphorelay signal transduction system. Phosphorylation of the Asp residue in the receiver domain activates the ability of the protein to promote the transcription of target genes. Could directly activate some type-A response regulators in response to cytokinins. This Arabidopsis thaliana (Mouse-ear cress) protein is Two-component response regulator ARR11 (ARR11).